The sequence spans 228 residues: Eukaryotic translation initiation factor 4E-2 (228 aa).

C130 and C134 are joined by a disulfide.

Belongs to the eukaryotic initiation factor 4E family. As to quaternary structure, eIF4F is a multi-subunit complex, the composition of which varies with external and internal environmental conditions. It is composed of at least eIF4A, eIF4E and eIF4G. eIF4E is also known to interact with other partners. In terms of tissue distribution, highly expressed in all somatic tissues.

Its function is as follows. Recognizes and binds the 7-methylguanosine-containing mRNA cap during an early step in the initiation of protein synthesis and facilitates ribosome binding by inducing the unwinding of the mRNAs secondary structures. All 5 eIF4E proteins bind monomethyl cap structures. Only ife-1, ife-2 and ife-5 bind trimethyl cap structures which result from trans-splicing. Translation of trimethyl cap structure mRNAs may be regulated by intracellular redox state; disulfide bonds change the width and depth of the cap-binding cavity determining selectivity to mRNA caps. Probably by regulating mRNA translation in somatic cells, negatively regulates lifespan independently of daf-2/insulin and let-363/TOR pathways. Negatively regulates resistance to oxidative stress. May play a role in embryonic development. This is Eukaryotic translation initiation factor 4E-2 (ife-2) from Caenorhabditis elegans.